Here is a 198-residue protein sequence, read N- to C-terminus: Nucleoid occlusion factor SlmA (198 aa).

Residues 10–70 form the HTH tetR-type domain; the sequence is NRREEILQSL…SLIEFIEDSL (61 aa). A DNA-binding region (H-T-H motif) is located at residues 33 to 52; sequence TTAKLAASVGVSEAALYRHF. Residues 117 to 144 are a coiled coil; sequence EQDRLQGRINQLFERIEAQLRQVLREKR.

Belongs to the nucleoid occlusion factor SlmA family. As to quaternary structure, homodimer. Interacts with FtsZ.

Its subcellular location is the cytoplasm. It is found in the nucleoid. In terms of biological role, required for nucleoid occlusion (NO) phenomenon, which prevents Z-ring formation and cell division over the nucleoid. Acts as a DNA-associated cell division inhibitor that binds simultaneously chromosomal DNA and FtsZ, and disrupts the assembly of FtsZ polymers. SlmA-DNA-binding sequences (SBS) are dispersed on non-Ter regions of the chromosome, preventing FtsZ polymerization at these regions. The polypeptide is Nucleoid occlusion factor SlmA (Salmonella agona (strain SL483)).